The primary structure comprises 229 residues: NAD(P)H-quinone oxidoreductase subunit K, chloroplastic (229 aa).

4 residues coordinate [4Fe-4S] cluster: cysteine 43, cysteine 44, cysteine 108, and cysteine 139.

This sequence belongs to the complex I 20 kDa subunit family. As to quaternary structure, NDH is composed of at least 16 different subunits, 5 of which are encoded in the nucleus. [4Fe-4S] cluster serves as cofactor.

The protein localises to the plastid. It localises to the chloroplast thylakoid membrane. The catalysed reaction is a plastoquinone + NADH + (n+1) H(+)(in) = a plastoquinol + NAD(+) + n H(+)(out). It carries out the reaction a plastoquinone + NADPH + (n+1) H(+)(in) = a plastoquinol + NADP(+) + n H(+)(out). In terms of biological role, NDH shuttles electrons from NAD(P)H:plastoquinone, via FMN and iron-sulfur (Fe-S) centers, to quinones in the photosynthetic chain and possibly in a chloroplast respiratory chain. The immediate electron acceptor for the enzyme in this species is believed to be plastoquinone. Couples the redox reaction to proton translocation, and thus conserves the redox energy in a proton gradient. The polypeptide is NAD(P)H-quinone oxidoreductase subunit K, chloroplastic (Piper cenocladum (Ant piper)).